The following is a 309-amino-acid chain: Aspartate carbamoyltransferase catalytic subunit (309 aa).

Positions 55 and 56 each coordinate carbamoyl phosphate. K85 is an L-aspartate binding site. Residues R106, H135, and Q138 each coordinate carbamoyl phosphate. Residues R168 and R230 each contribute to the L-aspartate site. Residues L268 and P269 each contribute to the carbamoyl phosphate site.

It belongs to the aspartate/ornithine carbamoyltransferase superfamily. ATCase family. In terms of assembly, heterododecamer (2C3:3R2) of six catalytic PyrB chains organized as two trimers (C3), and six regulatory PyrI chains organized as three dimers (R2).

It carries out the reaction carbamoyl phosphate + L-aspartate = N-carbamoyl-L-aspartate + phosphate + H(+). The protein operates within pyrimidine metabolism; UMP biosynthesis via de novo pathway; (S)-dihydroorotate from bicarbonate: step 2/3. Its function is as follows. Catalyzes the condensation of carbamoyl phosphate and aspartate to form carbamoyl aspartate and inorganic phosphate, the committed step in the de novo pyrimidine nucleotide biosynthesis pathway. This Vibrio vulnificus (strain YJ016) protein is Aspartate carbamoyltransferase catalytic subunit.